The sequence spans 149 residues: Early lymphoid activation gene protein (149 aa).

Expressed in heart, kidney, lung, and skeletal muscle, with lower levels in pancreas and liver.

Its function is as follows. May function as an early signal that helps mediate the activation of T-cells. This chain is Early lymphoid activation gene protein (DIAPH2-AS1), found in Homo sapiens (Human).